We begin with the raw amino-acid sequence, 354 residues long: Phospho-N-acetylmuramoyl-pentapeptide-transferase (354 aa).

The next 10 helical transmembrane spans lie at 23-43, 66-86, 88-108, 138-158, 161-181, 193-213, 227-247, 257-277, 282-302, and 331-351; these read IAFF…IAWA, TPTM…LLCS, LTNT…FIGF, FALS…FIPF, YALF…ITAS, GLAS…VYLC, VVGV…ILGF, VFMG…TGVV, ILLI…ILQV, and KIIV…LTTL.

This sequence belongs to the glycosyltransferase 4 family. MraY subfamily. Requires Mg(2+) as cofactor.

Its subcellular location is the cell inner membrane. The enzyme catalyses UDP-N-acetyl-alpha-D-muramoyl-L-alanyl-gamma-D-glutamyl-meso-2,6-diaminopimeloyl-D-alanyl-D-alanine + di-trans,octa-cis-undecaprenyl phosphate = di-trans,octa-cis-undecaprenyl diphospho-N-acetyl-alpha-D-muramoyl-L-alanyl-D-glutamyl-meso-2,6-diaminopimeloyl-D-alanyl-D-alanine + UMP. Its pathway is cell wall biogenesis; peptidoglycan biosynthesis. Its function is as follows. Catalyzes the initial step of the lipid cycle reactions in the biosynthesis of the cell wall peptidoglycan: transfers peptidoglycan precursor phospho-MurNAc-pentapeptide from UDP-MurNAc-pentapeptide onto the lipid carrier undecaprenyl phosphate, yielding undecaprenyl-pyrophosphoryl-MurNAc-pentapeptide, known as lipid I. The protein is Phospho-N-acetylmuramoyl-pentapeptide-transferase of Campylobacter hominis (strain ATCC BAA-381 / DSM 21671 / CCUG 45161 / LMG 19568 / NCTC 13146 / CH001A).